Consider the following 90-residue polypeptide: Genome polyprotein (90 aa).

This sequence belongs to the potyviridae genome polyprotein family. In terms of processing, genome polyprotein of potyviruses undergoes post-translational proteolytic processing by the main proteinase NIa-pro resulting in the production of at least ten individual proteins. The P1 proteinase and the HC-pro cleave only their respective C-termini autocatalytically. 6K1 is essential for proper proteolytic separation of P3 from CI.

Its subcellular location is the virion. Functionally, involved in aphid transmission, cell-to-cell and systemis movement, encapsidation of the viral RNA and in the regulation of viral RNA amplification. In Gloriosa stripe mosaic virus (GSMV), this protein is Genome polyprotein.